The chain runs to 162 residues: uncharacterized protein (162 aa).

Residues Met-1–Ala-24 form the signal peptide.

This is an uncharacterized protein from Mycobacterium bovis (strain ATCC BAA-935 / AF2122/97).